Here is a 507-residue protein sequence, read N- to C-terminus: Cytochrome P450 3A28 (507 aa).

Cysteine 442 contributes to the heme binding site.

The protein belongs to the cytochrome P450 family. Heme is required as a cofactor.

The protein resides in the endoplasmic reticulum membrane. It is found in the microsome membrane. The enzyme catalyses an organic molecule + reduced [NADPH--hemoprotein reductase] + O2 = an alcohol + oxidized [NADPH--hemoprotein reductase] + H2O + H(+). Functionally, cytochromes P450 are a group of heme-thiolate monooxygenases. In liver microsomes, this enzyme is involved in an NADPH-dependent electron transport pathway. It oxidizes a variety of structurally unrelated compounds, including steroids, fatty acids, and xenobiotics. This Bos taurus (Bovine) protein is Cytochrome P450 3A28 (CYP3A28).